Consider the following 296-residue polypeptide: MKRLSDTSSAITHTNKSGIASFRNDQARLSLAFTDDAGTTRMTERSHFGPLRVQKTLYPEHPAVCHAIIVHPPGGIVGGDQLTITARVGDRAHALLTTPGAGKWYRANGQLSQQQVSLEVGADAALEWLPQETIFFNEADVRLEHNVTLAADARYIGGEILCFGRTASGETFDSGRVAQRTSIRRGGKLLWFEQGALQARSTSMHSPLSLAGYTVCATLIAVGKTMNGAFLNELREESSALAQGGRSGATQMKQVLVARYLGHSSETARLWMTRAWQRIRPELMQRDAVIPRIWNT.

This sequence belongs to the UreD family. UreD, UreF and UreG form a complex that acts as a GTP-hydrolysis-dependent molecular chaperone, activating the urease apoprotein by helping to assemble the nickel containing metallocenter of UreC. The UreE protein probably delivers the nickel.

Its subcellular location is the cytoplasm. In terms of biological role, required for maturation of urease via the functional incorporation of the urease nickel metallocenter. In Janthinobacterium sp. (strain Marseille) (Minibacterium massiliensis), this protein is Urease accessory protein UreD.